A 397-amino-acid chain; its full sequence is ATP phosphoribosyltransferase regulatory subunit (397 aa).

Belongs to the class-II aminoacyl-tRNA synthetase family. HisZ subfamily. As to quaternary structure, heteromultimer composed of HisG and HisZ subunits.

Its subcellular location is the cytoplasm. Its pathway is amino-acid biosynthesis; L-histidine biosynthesis; L-histidine from 5-phospho-alpha-D-ribose 1-diphosphate: step 1/9. Required for the first step of histidine biosynthesis. May allow the feedback regulation of ATP phosphoribosyltransferase activity by histidine. This Nitrosococcus oceani (strain ATCC 19707 / BCRC 17464 / JCM 30415 / NCIMB 11848 / C-107) protein is ATP phosphoribosyltransferase regulatory subunit.